A 219-amino-acid chain; its full sequence is 7-cyano-7-deazaguanine synthase (219 aa).

Residue 10–20 (FSGGQDSTTCL) coordinates ATP. Zn(2+) contacts are provided by C188, C197, C200, and C203.

It belongs to the QueC family. In terms of assembly, homodimer. Requires Zn(2+) as cofactor.

The enzyme catalyses 7-carboxy-7-deazaguanine + NH4(+) + ATP = 7-cyano-7-deazaguanine + ADP + phosphate + H2O + H(+). Its pathway is purine metabolism; 7-cyano-7-deazaguanine biosynthesis. In terms of biological role, catalyzes the ATP-dependent conversion of 7-carboxy-7-deazaguanine (CDG) to 7-cyano-7-deazaguanine (preQ(0)). The polypeptide is 7-cyano-7-deazaguanine synthase (Clostridium botulinum (strain ATCC 19397 / Type A)).